The primary structure comprises 430 residues: Resistance to inhibitors of cholinesterase protein 19 (430 aa).

The region spanning 56–260 (ASDNELDTCL…TSRAFETLAE (205 aa)) is the AH domain. The interval 279–342 (GTKPERERKS…SPLIEDVDDE (64 aa)) is disordered. Residues 281–294 (KPERERKSEKEESA) show a composition bias toward basic and acidic residues.

Interacts with the GTPase activator protein tbc-8; the interaction is direct and may be required for the activation of rab-2 and dense vesicle maturation in cholinergic motoneurons. Interacts with rund-1. In terms of tissue distribution, expressed in all neurons. Highly expressed in m2 pharyngeal neurons and some pharyngeal interneurons. Also expressed in the excretory canal and the gland cells located just below the nerve ring in the head.

The protein resides in the cytoplasm. The protein localises to the cytoplasmic vesicle membrane. Functionally, may be involved in neurotransmitter secretion. In association with the GTPase activator protein tbc-8 activates rab-2 during dense core vesicle maturation in cholinergic motoneurons. This chain is Resistance to inhibitors of cholinesterase protein 19, found in Caenorhabditis elegans.